The chain runs to 194 residues: dITP/XTP pyrophosphatase (194 aa).

11–16 serves as a coordination point for substrate; it reads SHNAGK. Asp-70 serves as the catalytic Proton acceptor. Asp-70 contacts Mg(2+). Substrate is bound by residues Ser-71, 149–152, Lys-172, and 177–178; these read FGYD and HR.

Belongs to the HAM1 NTPase family. In terms of assembly, homodimer. It depends on Mg(2+) as a cofactor.

The enzyme catalyses XTP + H2O = XMP + diphosphate + H(+). The catalysed reaction is dITP + H2O = dIMP + diphosphate + H(+). It carries out the reaction ITP + H2O = IMP + diphosphate + H(+). Functionally, pyrophosphatase that catalyzes the hydrolysis of nucleoside triphosphates to their monophosphate derivatives, with a high preference for the non-canonical purine nucleotides XTP (xanthosine triphosphate), dITP (deoxyinosine triphosphate) and ITP. Seems to function as a house-cleaning enzyme that removes non-canonical purine nucleotides from the nucleotide pool, thus preventing their incorporation into DNA/RNA and avoiding chromosomal lesions. In Thermosynechococcus vestitus (strain NIES-2133 / IAM M-273 / BP-1), this protein is dITP/XTP pyrophosphatase.